The following is a 247-amino-acid chain: Sulfate transporter CysZ (247 aa).

Transmembrane regions (helical) follow at residues 29-49, 66-86, 141-160, 164-186, and 212-232; these read FVVL…FYLF, FLSW…LATF, LLYI…IPAL, VGPV…DYPF, and VLVS…PVAI.

Belongs to the CysZ family.

Its subcellular location is the cell inner membrane. Functionally, high affinity, high specificity proton-dependent sulfate transporter, which mediates sulfate uptake. Provides the sulfur source for the cysteine synthesis pathway. The polypeptide is Sulfate transporter CysZ (Vibrio parahaemolyticus serotype O3:K6 (strain RIMD 2210633)).